We begin with the raw amino-acid sequence, 247 residues long: Coproheme decarboxylase (247 aa).

Fe-coproporphyrin III contacts are provided by residues R129, 143–147 (YPMDK), H170, Q183, and S221. Residue Y143 is part of the active site.

It belongs to the ChdC family. Type 1 subfamily. Fe-coproporphyrin III is required as a cofactor.

The enzyme catalyses Fe-coproporphyrin III + 2 H2O2 + 2 H(+) = heme b + 2 CO2 + 4 H2O. It catalyses the reaction Fe-coproporphyrin III + H2O2 + H(+) = harderoheme III + CO2 + 2 H2O. It carries out the reaction harderoheme III + H2O2 + H(+) = heme b + CO2 + 2 H2O. The protein operates within porphyrin-containing compound metabolism; protoheme biosynthesis. Its function is as follows. Involved in coproporphyrin-dependent heme b biosynthesis. Catalyzes the decarboxylation of Fe-coproporphyrin III (coproheme) to heme b (protoheme IX), the last step of the pathway. The reaction occurs in a stepwise manner with a three-propionate intermediate. The sequence is that of Coproheme decarboxylase from Bacillus cereus (strain AH820).